Reading from the N-terminus, the 60-residue chain is Sec-independent protein translocase protein TatA (60 aa).

The helical transmembrane segment at M1–G21 threads the bilayer.

This sequence belongs to the TatA/E family. In terms of assembly, the Tat system comprises two distinct complexes: a TatABC complex, containing multiple copies of TatA, TatB and TatC subunits, and a separate TatA complex, containing only TatA subunits. Substrates initially bind to the TatABC complex, which probably triggers association of the separate TatA complex to form the active translocon.

It is found in the cell membrane. Part of the twin-arginine translocation (Tat) system that transports large folded proteins containing a characteristic twin-arginine motif in their signal peptide across membranes. TatA could form the protein-conducting channel of the Tat system. The protein is Sec-independent protein translocase protein TatA of Corynebacterium glutamicum (strain R).